Here is a 202-residue protein sequence, read N- to C-terminus: uncharacterized protein (202 aa).

Helical transmembrane passes span 34-54, 102-122, and 125-145; these read AAYVISNTIIFGVYAIIQARI, MGVAIMAFMHLYMGYAQPLVI, and ILPLISLFTNNLVSIYIFNKA. A disordered region spans residues 165–202; that stretch reads NKPAAAVTGTSSNSNNASAKSDGPTITELNENETEKSS. The segment covering 168 to 185 has biased composition (low complexity); the sequence is AAAVTGTSSNSNNASAKS. Phosphoserine occurs at positions 185 and 201.

It belongs to the PHO88 family.

The protein localises to the endoplasmic reticulum membrane. This is an uncharacterized protein from Schizosaccharomyces pombe (strain 972 / ATCC 24843) (Fission yeast).